The following is a 486-amino-acid chain: Elastin-binding protein EbpS (486 aa).

The span at 1-40 (MSNNFKDDFEKNRQSIDTNSHQDHTEDVEKDQSELEHQDT) shows a compositional bias: basic and acidic residues. The disordered stretch occupies residues 1-314 (MSNNFKDDFE…NHDRDKERKK (314 aa)). The Extracellular segment spans residues 2–204 (SNNFKDDFEK…ESKDHHSGKK (203 aa)). Residues 14 to 34 (QSIDTNSHQDHTEDVEKDQSE) form an elastin-binding region. The span at 64–85 (TNHNKQVHNESQTSEDNVQNEA) shows a compositional bias: polar residues. Composition is skewed to basic and acidic residues over residues 103–118 (EPSH…EEYY) and 126–149 (DKSH…ENNT). Polar residues predominate over residues 150 to 166 (EHSTVSDKSIAEQSQQP). Residues 180–199 (SKDKHDDVTVKQDKDESKDH) are compositionally biased toward basic and acidic residues. Composition is skewed to low complexity over residues 204–225 (KGAA…MGVS) and 233–246 (DAQN…SNNS). A helical transmembrane segment spans residues 205 to 225 (GAAIGAGTAGVAGAAGAMGVS). Residues 226-319 (KAKKHSNDAQ…KERKKGGMAK (94 aa)) are Cytoplasmic-facing. Residues 247–259 (TEDKASQDKSKDH) show a composition bias toward basic and acidic residues. Over residues 278–297 (GAASKSASAASKPHASNNAS) the composition is skewed to low complexity. The segment covering 299-314 (NHDEHDNHDRDKERKK) has biased composition (basic and acidic residues). Residues 320–340 (VLLPLIAAVLIIGALAIFGGM) traverse the membrane as a helical segment. At 341–486 (ALNNHNNGTK…IRNGQQIVIP (146 aa)) the chain is on the extracellular side. The interval 351–440 (ENKIANTNKN…QRQGGGQRHT (90 aa)) is disordered. A compositionally biased stretch (basic and acidic residues) spans 361–398 (NADESKDKDTSKDASKDKSKSTDSDKSKEDQDKATKDE). Over residues 403 to 431 (QNNANQANNQAQNNQNQQQANQNQQQQQQ) the composition is skewed to low complexity. The LysM domain maps to 437–485 (QRHTVNGQENLYRIAIQYYGSGSPENVEKIRRANGLSGNNIRNGQQIVI).

The protein resides in the cell membrane. Functionally, promotes binding of soluble elastin peptides and tropoelastin to S.aureus cells although it is not able to promote bacterial adherence to immobilized elastin and, therefore, is not a microbial surface component recognizing adhesive matrix molecule (MSCRAMM). The polypeptide is Elastin-binding protein EbpS (ebpS) (Staphylococcus aureus (strain Mu50 / ATCC 700699)).